Consider the following 128-residue polypeptide: Lymphocyte antigen 6D (128 aa).

A signal peptide spans 1-20 (MRTALLLLAALAVATGPALT). Positions 21-108 (LRCHVCTSSS…AAPTRTALAH (88 aa)) constitute a UPAR/Ly6 domain. 5 disulfide bridges follow: cysteine 23–cysteine 45, cysteine 26–cysteine 32, cysteine 38–cysteine 63, cysteine 67–cysteine 86, and cysteine 87–cysteine 92. Asparagine 98 carries GPI-anchor amidated asparagine lipidation. A propeptide spans 99 to 128 (AAPTRTALAHSALSLGLALSLLAVILAPSL) (removed in mature form).

Expressed exclusively at the outer cell surface of transitional epithelia and the keratinocyte of stratified squamous epithelia.

The protein resides in the cell membrane. Its function is as follows. May act as a specification marker at earliest stage specification of lymphocytes between B- and T-cell development. Marks the earliest stage of B-cell specification. In Homo sapiens (Human), this protein is Lymphocyte antigen 6D (LY6D).